The following is a 203-amino-acid chain: Suppressor/enhancer of lin-12 protein 9 (203 aa).

A signal peptide spans 1-18 (MNSLTWILAVLFVTPAAS). At 19–170 (YFIHVDANEE…RNINENTNSR (152 aa)) the chain is on the lumenal side. The 83-residue stretch at 28–110 (EQCFFDRLTS…PKAVMFTVEI (83 aa)) folds into the GOLD domain. Residues 171 to 191 (VVMWAAFEAFVLVGMTVGQIF) form a helical membrane-spanning segment. At 192-203 (YLKRFFEVRTMV) the chain is on the cytoplasmic side.

Belongs to the EMP24/GP25L family.

It localises to the cytoplasmic vesicle membrane. It is found in the cytoplasmic vesicle. The protein localises to the COPI-coated vesicle membrane. Its subcellular location is the golgi apparatus membrane. May have a role in the negative regulation of lin-12 and glp-1 transport to the cell surface. May also have a role in a quality control mechanism for endoplasmic reticulum-Golgi transport; the budding of coatomer-coated and other species of coated vesicles, could bind cargo molecules to collect them into budding vesicles. Involved in regulating the expression of proteasomal subunits such as rpt-3 in order to confer resistance to proteasomal dysfunction. The chain is Suppressor/enhancer of lin-12 protein 9 (sel-9) from Caenorhabditis elegans.